Consider the following 181-residue polypeptide: ATP synthase subunit delta (181 aa).

This sequence belongs to the ATPase delta chain family. F-type ATPases have 2 components, F(1) - the catalytic core - and F(0) - the membrane proton channel. F(1) has five subunits: alpha(3), beta(3), gamma(1), delta(1), epsilon(1). F(0) has three main subunits: a(1), b(2) and c(10-14). The alpha and beta chains form an alternating ring which encloses part of the gamma chain. F(1) is attached to F(0) by a central stalk formed by the gamma and epsilon chains, while a peripheral stalk is formed by the delta and b chains.

It is found in the cell inner membrane. Its function is as follows. F(1)F(0) ATP synthase produces ATP from ADP in the presence of a proton or sodium gradient. F-type ATPases consist of two structural domains, F(1) containing the extramembraneous catalytic core and F(0) containing the membrane proton channel, linked together by a central stalk and a peripheral stalk. During catalysis, ATP synthesis in the catalytic domain of F(1) is coupled via a rotary mechanism of the central stalk subunits to proton translocation. In terms of biological role, this protein is part of the stalk that links CF(0) to CF(1). It either transmits conformational changes from CF(0) to CF(1) or is implicated in proton conduction. This chain is ATP synthase subunit delta, found in Chlorobaculum tepidum (strain ATCC 49652 / DSM 12025 / NBRC 103806 / TLS) (Chlorobium tepidum).